A 274-amino-acid polypeptide reads, in one-letter code: Large ribosomal subunit protein uL2 (274 aa).

The disordered stretch occupies residues 221 to 274; that stretch reads RGTAMNPVDHPHGGGEGRNFGKHPVTPWGVQTKGKKTRSNKRTDKFIVRRRSKK.

The protein belongs to the universal ribosomal protein uL2 family. In terms of assembly, part of the 50S ribosomal subunit. Forms a bridge to the 30S subunit in the 70S ribosome.

Its function is as follows. One of the primary rRNA binding proteins. Required for association of the 30S and 50S subunits to form the 70S ribosome, for tRNA binding and peptide bond formation. It has been suggested to have peptidyltransferase activity; this is somewhat controversial. Makes several contacts with the 16S rRNA in the 70S ribosome. In Yersinia pseudotuberculosis serotype O:1b (strain IP 31758), this protein is Large ribosomal subunit protein uL2.